Here is a 158-residue protein sequence, read N- to C-terminus: Protein EOLA1 (158 aa).

In terms of domain architecture, ASCH spans 6-92 (LSFRQPYAGF…IAGLVDIGET (87 aa)).

The protein belongs to the EOLA family. As to quaternary structure, interacts with MT2A. In terms of tissue distribution, expressed primarily in heart, skeletal muscle, kidney, liver and placenta. Relatively high level of expression in spleen, colon and small intestine. Almost no expression in brain, thymus, lung and peripheral blood leukocytes. Expressed in epithelial cells (at protein level).

Its function is as follows. May play a role in cell protection during the inflammatory response. In epithelial cells, negatively regulates IL6 production and apoptosis through the regulation of MT2A expression. In Homo sapiens (Human), this protein is Protein EOLA1.